The sequence spans 268 residues: uncharacterized protein (268 aa).

The segment at 45–64 is disordered; that stretch reads SDTQGPAPGINGQGKPSPGA.

This is an uncharacterized protein from Aquifex aeolicus (strain VF5).